We begin with the raw amino-acid sequence, 873 residues long: Zinc fingers and homeoboxes protein 1 (873 aa).

The interval 24–63 (LISDLDEGPPVLTPVENTRAESISSDEEVHESVDSDNQQN) is disordered. The residue at position 36 (Thr36) is a Phosphothreonine. A phosphoserine mark is found at Ser45, Ser47, and Ser48. 2 C2H2-type zinc fingers span residues 70–93 (YECK…DSEH) and 102–125 (YVCV…LKYH). Residue Lys159 forms a Glycyl lysine isopeptide (Lys-Gly) (interchain with G-Cter in SUMO2) linkage. Positions 198–236 (VHHNSVEDVPEEKENEIKPDREETVENPSSSASESNTST) are disordered. Ser202 is subject to Phosphoserine. The span at 212-221 (NEIKPDREET) shows a compositional bias: basic and acidic residues. Over residues 223–236 (ENPSSSASESNTST) the composition is skewed to low complexity. The tract at residues 272-432 (NSNLIPKVLI…QNNVQKSQVP (161 aa)) is required for dimerization. Positions 272–564 (NSNLIPKVLI…VQPKQSWNPF (293 aa)) are required for interaction with NFYA. The homeobox 1 DNA-binding region spans 284–346 (NSIPTYNAAL…LKHGVSWTPE (63 aa)). Positions 431–454 (VPAAQPTAETKPATAAVPTSQSVK) are disordered. Glycyl lysine isopeptide (Lys-Gly) (interchain with G-Cter in SUMO2) cross-links involve residues Lys441, Lys454, and Lys485. The segment at residues 464–526 (SFGIRAKKTK…YNQRNSKSNQ (63 aa)) is a DNA-binding region (homeobox 2). 3 disordered regions span residues 544 to 563 (DETT…SWNP), 626 to 668 (KEEK…CKKT), and 732 to 769 (SSMN…INNW). A compositionally biased stretch (polar residues) spans 550–562 (PTVGTVQPKQSWN). A DNA-binding region (homeobox 3) is located at residues 569–630 (PQKFKEKTAE…KSKALKEEKM (62 aa)). A Glycyl lysine isopeptide (Lys-Gly) (interchain with G-Cter in SUMO2) cross-link involves residue Lys629. Ser648 carries the post-translational modification Phosphoserine. A DNA-binding region (homeobox 4) is located at residues 660–722 (STGKICKKTP…YAWKNGNLKW (63 aa)). The tract at residues 734–768 (MNGLSSLRKRGRGRPKGRGRGRPRGRPRGSKRINN) is required for nuclear localization. Positions 740-764 (LRKRGRGRPKGRGRGRPRGRPRGSK) are enriched in basic residues. Ser774 is subject to Phosphoserine. The homeobox 5 DNA-binding region spans 777–832 (KFKTGTAILKDYYLKHKFLNEQDLDELVNKSHMGYEQVREWFAERQRRSELGIELF). Residues 829-873 (IELFEENEEEDEVIDDQEEDEEETDDSDTWEPPRHVKRKLSKSDD) form a disordered region. Acidic residues predominate over residues 831-857 (LFEENEEEDEVIDDQEEDEEETDDSDT). Residues 831 to 873 (LFEENEEEDEVIDDQEEDEEETDDSDTWEPPRHVKRKLSKSDD) form a required for repressor activity region. A compositionally biased stretch (basic residues) spans 863–873 (HVKRKLSKSDD).

It belongs to the ZHX family. In terms of assembly, forms homodimers. Heterodimer (via HD1 domain) with ZHX2 (via HD1 domain). Also forms a heterodimer with ZHX3 which is a prerequisite for repressor activity. Interacts with ATF7IP and NFYA. Interacts (via homeobox domains) with DNMT3B (via PWWP domain).

It localises to the nucleus. Functionally, acts as a transcriptional repressor. Increases DNMT3B-mediated repressive transcriptional activity when DNMT3B is tethered to DNA. May link molecule between DNMT3B and other co-repressor proteins. The sequence is that of Zinc fingers and homeoboxes protein 1 (ZHX1) from Pongo pygmaeus (Bornean orangutan).